The sequence spans 203 residues: Small ribosomal subunit protein uS4c (203 aa).

The segment at Leu15–Ser42 is disordered. An S4 RNA-binding domain is found at Met89 to Asn150.

Belongs to the universal ribosomal protein uS4 family. Part of the 30S ribosomal subunit. Contacts protein S5. The interaction surface between S4 and S5 is involved in control of translational fidelity.

The protein localises to the plastid. It is found in the chloroplast. Its function is as follows. One of the primary rRNA binding proteins, it binds directly to 16S rRNA where it nucleates assembly of the body of the 30S subunit. In terms of biological role, with S5 and S12 plays an important role in translational accuracy. The polypeptide is Small ribosomal subunit protein uS4c (rps4) (Oenothera elata subsp. hookeri (Hooker's evening primrose)).